The sequence spans 391 residues: NADH-quinone oxidoreductase subunit D (391 aa).

It belongs to the complex I 49 kDa subunit family. NDH-1 is composed of 14 different subunits. Subunits NuoB, C, D, E, F, and G constitute the peripheral sector of the complex.

It localises to the cell inner membrane. It catalyses the reaction a quinone + NADH + 5 H(+)(in) = a quinol + NAD(+) + 4 H(+)(out). NDH-1 shuttles electrons from NADH, via FMN and iron-sulfur (Fe-S) centers, to quinones in the respiratory chain. The immediate electron acceptor for the enzyme in this species is believed to be ubiquinone. Couples the redox reaction to proton translocation (for every two electrons transferred, four hydrogen ions are translocated across the cytoplasmic membrane), and thus conserves the redox energy in a proton gradient. This chain is NADH-quinone oxidoreductase subunit D, found in Rickettsia rickettsii (strain Sheila Smith).